A 487-amino-acid chain; its full sequence is Cytochrome P450 2C4 (487 aa).

Cys-432 lines the heme pocket.

It belongs to the cytochrome P450 family. Requires heme as cofactor.

The protein resides in the endoplasmic reticulum membrane. The protein localises to the microsome membrane. It carries out the reaction an organic molecule + reduced [NADPH--hemoprotein reductase] + O2 = an alcohol + oxidized [NADPH--hemoprotein reductase] + H2O + H(+). Cytochromes P450 are a group of heme-thiolate monooxygenases. In liver microsomes, this enzyme is involved in an NADPH-dependent electron transport pathway. It oxidizes a variety of structurally unrelated compounds, including steroids, fatty acids, and xenobiotics. The polypeptide is Cytochrome P450 2C4 (CYP2C4) (Oryctolagus cuniculus (Rabbit)).